We begin with the raw amino-acid sequence, 608 residues long: MCGIVGYSGKKEASSILVEGLSKLEYRGYDSAGVAILNDGKINVSKCKGRLVNLENKLEENPIAGNIGIGHTRWATHGEPSDLNAHPHSNKDNTISVVHNGIIENYMQLRTWLKSKGYEFKSETDTEVIPNLVDYFYEGNLLDAVIKAISKVEGSYALGIVSSKEPDKVVAVRKDSPLIVGISEDGNFIASDVPAILNHTRDIYYIKDKEFVVLTSEGVEFYSNEGEKIEKELNHIEWDANAAEKGGYEHFMLKEIYEQPKAIRDTMTSRIIAGQPIKLDDISITKEQIENIDKIYIVACGTAYHAGVVGKYVIEKFARIPVEVDIASEFRYRDPIITKNTLMIVLSQSGETADTLAALREAKSIGARVIAVTNVVGSSVARAADDILYTWAGPEIAVASTKAYTTQLITMYILGLFFAQNKNTLTNEEIEKIKADMLTLPEKAEEVLASKEKVQKFAANTYMHKDMFYLGRGIDYAVAMEGALKLKEISYIHAEAYAGGELKHGTIALIEEGTVVVALGTQSDIYDKMVSNIKEVTTRGAKVLGIAAEGRKGMEEVVDSVIYVPEVNDMLLPVLSVMQLQLLAYYVSVEKGCDVDKPRNLAKSVTVE.

C2 (nucleophile; for GATase activity) is an active-site residue. The Glutamine amidotransferase type-2 domain maps to 2 to 217; it reads CGIVGYSGKK…DKEFVVLTSE (216 aa). SIS domains lie at 285–424 and 453–598; these read TKEQ…NKNT and KVQK…VDKP. The active-site For Fru-6P isomerization activity is K603.

As to quaternary structure, homodimer.

The protein localises to the cytoplasm. The catalysed reaction is D-fructose 6-phosphate + L-glutamine = D-glucosamine 6-phosphate + L-glutamate. Catalyzes the first step in hexosamine metabolism, converting fructose-6P into glucosamine-6P using glutamine as a nitrogen source. This is Glutamine--fructose-6-phosphate aminotransferase [isomerizing] from Clostridium acetobutylicum (strain ATCC 824 / DSM 792 / JCM 1419 / IAM 19013 / LMG 5710 / NBRC 13948 / NRRL B-527 / VKM B-1787 / 2291 / W).